Reading from the N-terminus, the 123-residue chain is MEKKPNKRIKGEYYELMAKRYLETHQLTFIERNFYSKTGELDLIMRDRDSFVFVEVKYRASSNYGSAQEMVTWQKQRKLQRTALFWLMKNGLSVEHTSFRFDVVAIHSQGQDINWIKNAIVEG.

The protein belongs to the UPF0102 family.

This Aliivibrio salmonicida (strain LFI1238) (Vibrio salmonicida (strain LFI1238)) protein is UPF0102 protein VSAL_I2655.